A 278-amino-acid chain; its full sequence is MSDIDEKNDTKESSFSSDVVLLSLLISGSTLGAIAGYNRYLKQVTKATDIPNYMFRKRWMYGKVTAVGDGDNFHLFHTPGGIFGGWGWLRKVPKLPKSDSNGLIVSRKKTSNFYSGLKNSYHKFTGSYRYSSEYFLDLKVPYKNLRNLPTVPIRLCAIDAPERAHFGNTSQPYGDEALIWLRNRLLGKYVWVKPLSVDQYNRCVSKVVCWNWLGWQNISLQMVRQGLAVVYEGKTSAEFDREEFLYRFYERRSKAKKRGLWRQRVIETPGEYKKKIKK.

Residues 15 to 37 (FSSDVVLLSLLISGSTLGAIAGY) form a helical membrane-spanning segment. A TNase-like domain is found at 58–263 (RWMYGKVTAV…KAKKRGLWRQ (206 aa)). Residue Arg-154 is part of the active site. Residue Asp-159 participates in Ca(2+) binding. Active-site residues include Glu-162 and Arg-202.

The protein belongs to the LCL3 family.

Its subcellular location is the mitochondrion. It localises to the membrane. This is Probable endonuclease LCL3 (LCL3) from Vanderwaltozyma polyspora (strain ATCC 22028 / DSM 70294 / BCRC 21397 / CBS 2163 / NBRC 10782 / NRRL Y-8283 / UCD 57-17) (Kluyveromyces polysporus).